The primary structure comprises 459 residues: MIQKQHESKLEVGQTFPVTIKRLGINGEGVGYFKRQVVFIPGALPGEEVVAETTKIQRGFAEAKVKKVRKASPHRVKAPCPVYEECGGCQLQHLDYKEQLNQKRDIVVQAFEKYMKNSMEEKIRPTLGMENPWHYRNKSQLQVGRKDEKVITGLYKQNSHQLIDIAHCMIQHKATNEATKVVRRILEKLNVSIYNEKKQKGLVRTIVTRTAVQTGEVQVTLITTKEELPNKEQFIAEVQKQMPAVKSIMQNVNWRKTSVIFGDKTFKLAGKEVIQETLGDLSFELSARAFFQLNPEQTVVLYNEAKKAAALTGNEKIVDAYCGVGTIGLWLANDAAEVRGMDVIPEAIADARKNAKRHGFTNTKYEAGKAEQWLPKWVKEGWRPDVIVVDPPRTGCDDKLLETILKVKPKQVVYVSCNPSSLARDVQALMKSYEVEYVQPVDMFPHTAHVENVVKLTLK.

In terms of domain architecture, TRAM spans 9 to 67 (KLEVGQTFPVTIKRLGINGEGVGYFKRQVVFIPGALPGEEVVAETTKIQRGFAEAKVKK). [4Fe-4S] cluster-binding residues include Cys-80, Cys-86, Cys-89, and Cys-168. S-adenosyl-L-methionine is bound by residues Gln-292, Tyr-321, Asp-342, and Asp-390. The Nucleophile role is filled by Cys-417.

The protein belongs to the class I-like SAM-binding methyltransferase superfamily. RNA M5U methyltransferase family.

This is an uncharacterized protein from Bacillus anthracis.